The primary structure comprises 424 residues: MTSRNEALFSRAQRSIPGGVNSPVRAFRSVGGTPRFIERAEGARVWDADGKAYIDYVGSWGPAIAGHSHPAIVEAVREAALRGLSFGAPTESEVEMAELLCALLPSIEMLRLVSSGTEATMSAIRLARGFTGRDDIIKFEGCYHGHADSLLVKAGSGLLTFGNPSSGGVPADFAHHTVVLDYNDLDQVETVFKARGDQIAAVIVEPVAGNMNLIKPRPGFLEGLRRLCTEYGAVLIFDEVMTGFRVGPQGVQGLYGITPDLTTLGKVIGGGMPVGAFGGRRDIMNCIAPLGPVYQAGTLSGSPVAVAAGLASLRLTQAPGFYDALAARARSLVDGLSGVAREAGVPFSADSIGGMFGIYFSPSVPASFAEVMASDREAFNRFFHAMLDAGHYFAPSAFEAGFVSAAHGEADIQATVAAARACLR.

Lysine 266 carries the post-translational modification N6-(pyridoxal phosphate)lysine.

The protein belongs to the class-III pyridoxal-phosphate-dependent aminotransferase family. HemL subfamily. In terms of assembly, homodimer. The cofactor is pyridoxal 5'-phosphate.

The protein localises to the cytoplasm. It carries out the reaction (S)-4-amino-5-oxopentanoate = 5-aminolevulinate. The protein operates within porphyrin-containing compound metabolism; protoporphyrin-IX biosynthesis; 5-aminolevulinate from L-glutamyl-tRNA(Glu): step 2/2. The protein is Glutamate-1-semialdehyde 2,1-aminomutase of Azoarcus sp. (strain BH72).